Here is a 237-residue protein sequence, read N- to C-terminus: Large ribosomal subunit protein uL3 (237 aa).

Disordered regions lie at residues Ala133–Lys155 and Pro213–Glu237. Over residues His135–Arg150 the composition is skewed to polar residues. The residue at position 151 (Gln151) is an N5-methylglutamine. Residues Ala220–Glu237 show a composition bias toward low complexity.

It belongs to the universal ribosomal protein uL3 family. As to quaternary structure, part of the 50S ribosomal subunit. Forms a cluster with proteins L14 and L19. Methylated by PrmB.

In terms of biological role, one of the primary rRNA binding proteins, it binds directly near the 3'-end of the 23S rRNA, where it nucleates assembly of the 50S subunit. The sequence is that of Large ribosomal subunit protein uL3 from Brucella abortus (strain S19).